The primary structure comprises 157 residues: Nuclear cap-binding protein subunit 2 (157 aa).

MRNA-binding positions include Tyr-17, Tyr-40, 109–113 (RADWD), 120–124 (RQYGR), and 130–131 (QV). The RRM domain maps to 37–115 (CTLYVGNLSY…RVIRADWDAG (79 aa)).

It belongs to the RRM NCBP2 family. As to quaternary structure, component of the nuclear cap-binding complex (CBC), a heterodimer composed of ncbp-1 and ncbp-2 that interacts with m7GpppG-capped RNA.

Its subcellular location is the nucleus. Its function is as follows. Component of the cap-binding complex (CBC), which binds co-transcriptionally to the 5' cap of pre-mRNAs and is involved in various processes such as pre-mRNA splicing and RNA-mediated gene silencing (RNAi). The CBC complex is involved in miRNA-mediated RNA interference and is required for primary microRNAs (miRNAs) processing. In the CBC complex, ncbp-2 recognizes and binds capped RNAs (m7GpppG-capped RNA) but requires ncbp-1 to stabilize the movement of its N-terminal loop and lock the CBC into a high affinity cap-binding state with the cap structure. The sequence is that of Nuclear cap-binding protein subunit 2 (ncbp-2) from Caenorhabditis briggsae.